A 511-amino-acid polypeptide reads, in one-letter code: Glucose-6-phosphate 1-dehydrogenase, cytoplasmic isoform (511 aa).

NADP(+) is bound by residues 36-43 (GASGDLAK), R71, Y151, and K178. D-glucose 6-phosphate contacts are provided by residues K178, 208–212 (HYLGK), E246, and D265. H270 functions as the Proton acceptor in the catalytic mechanism. K353 contacts NADP(+). D-glucose 6-phosphate contacts are provided by K356 and R361. Residues K362, R366, and R390 each contribute to the NADP(+) site. Residue Q392 participates in D-glucose 6-phosphate binding. NADP(+) is bound by residues 398–400 (YMK), 418–420 (DLS), R484, and W506.

The protein belongs to the glucose-6-phosphate dehydrogenase family. Homotetramer. As to expression, found in tubers, stolons, roots, and flower buds.

The protein resides in the cytoplasm. It carries out the reaction D-glucose 6-phosphate + NADP(+) = 6-phospho-D-glucono-1,5-lactone + NADPH + H(+). Its pathway is carbohydrate degradation; pentose phosphate pathway; D-ribulose 5-phosphate from D-glucose 6-phosphate (oxidative stage): step 1/3. Regulated by metabolites. Functionally, catalyzes the rate-limiting step of the oxidative pentose-phosphate pathway, which represents a route for the dissimilation of carbohydrates besides glycolysis. The main function of this enzyme is to generate NADPH for reductive biosyntheses. The chain is Glucose-6-phosphate 1-dehydrogenase, cytoplasmic isoform (G6PDH) from Solanum tuberosum (Potato).